Reading from the N-terminus, the 388-residue chain is Ferrochelatase (388 aa).

Fe cation is bound by residues histidine 196 and glutamate 277.

Belongs to the ferrochelatase family.

Its subcellular location is the cytoplasm. It catalyses the reaction heme b + 2 H(+) = protoporphyrin IX + Fe(2+). It participates in porphyrin-containing compound metabolism; protoheme biosynthesis; protoheme from protoporphyrin-IX: step 1/1. Catalyzes the ferrous insertion into protoporphyrin IX. In Nostoc punctiforme (strain ATCC 29133 / PCC 73102), this protein is Ferrochelatase.